We begin with the raw amino-acid sequence, 180 residues long: Ribulose bisphosphate carboxylase small subunit, chloroplastic 2 (180 aa).

The N-terminal 56 residues, 1–56 (MASSVLSSAAVATVSRTPAQASMVAPFTGLKSTVGFPATKKNDDITSLASNGGRVQ), are a transit peptide targeting the chloroplast.

It belongs to the RuBisCO small chain family. Heterohexadecamer of 8 large and 8 small subunits.

Its subcellular location is the plastid. The protein resides in the chloroplast. RuBisCO catalyzes two reactions: the carboxylation of D-ribulose 1,5-bisphosphate, the primary event in carbon dioxide fixation, as well as the oxidative fragmentation of the pentose substrate. Both reactions occur simultaneously and in competition at the same active site. Although the small subunit is not catalytic it is essential for maximal activity. In Spinacia oleracea (Spinach), this protein is Ribulose bisphosphate carboxylase small subunit, chloroplastic 2.